A 255-amino-acid chain; its full sequence is 5-oxoprolinase subunit A (255 aa).

It belongs to the LamB/PxpA family. Forms a complex composed of PxpA, PxpB and PxpC.

It carries out the reaction 5-oxo-L-proline + ATP + 2 H2O = L-glutamate + ADP + phosphate + H(+). Its function is as follows. Catalyzes the cleavage of 5-oxoproline to form L-glutamate coupled to the hydrolysis of ATP to ADP and inorganic phosphate. The protein is 5-oxoprolinase subunit A of Nitrobacter winogradskyi (strain ATCC 25391 / DSM 10237 / CIP 104748 / NCIMB 11846 / Nb-255).